Here is a 271-residue protein sequence, read N- to C-terminus: uncharacterized protein (271 aa).

This is an uncharacterized protein from Galliformes (FAdV-1).